The sequence spans 842 residues: Glycogen phosphorylase, muscle form (842 aa).

An N-acetylserine modification is found at S2. S15 is subject to Phosphoserine; by PHK; in form phosphorylase A. Residues D43 and Y76 each contribute to the AMP site. Phosphotyrosine occurs at positions 204 and 227. 310 to 319 (RRFKSSKFGC) is a binding site for AMP. S430 bears the Phosphoserine mark. Residue Y473 is modified to Phosphotyrosine. K681 is subject to N6-(pyridoxal phosphate)lysine. S747 and S748 each carry phosphoserine.

This sequence belongs to the glycogen phosphorylase family. As to quaternary structure, homodimer. Homotetramer; to form the enzymatically active phosphorylase A. Requires pyridoxal 5'-phosphate as cofactor. Post-translationally, phosphorylation of Ser-15 converts phosphorylase B (unphosphorylated) to phosphorylase A.

It catalyses the reaction [(1-&gt;4)-alpha-D-glucosyl](n) + phosphate = [(1-&gt;4)-alpha-D-glucosyl](n-1) + alpha-D-glucose 1-phosphate. Allosterically regulated through the non-covalent binding of metabolites, being activated by AMP and inhibited by ATP, ADP, and glucose-6-phosphate. The activity is also controlled by post-translational modifications including phosphorylation. Functionally, allosteric enzyme that catalyzes the rate-limiting step in glycogen catabolism, the phosphorolytic cleavage of glycogen to produce glucose-1-phosphate, and plays a central role in maintaining cellular and organismal glucose homeostasis. In Bos taurus (Bovine), this protein is Glycogen phosphorylase, muscle form.